Consider the following 509-residue polypeptide: ATP synthase subunit alpha (509 aa).

169-176 lines the ATP pocket; the sequence is GDRQTGKT.

The protein belongs to the ATPase alpha/beta chains family. As to quaternary structure, F-type ATPases have 2 components, CF(1) - the catalytic core - and CF(0) - the membrane proton channel. CF(1) has five subunits: alpha(3), beta(3), gamma(1), delta(1), epsilon(1). CF(0) has three main subunits: a(1), b(2) and c(9-12). The alpha and beta chains form an alternating ring which encloses part of the gamma chain. CF(1) is attached to CF(0) by a central stalk formed by the gamma and epsilon chains, while a peripheral stalk is formed by the delta and b chains.

Its subcellular location is the cell inner membrane. It carries out the reaction ATP + H2O + 4 H(+)(in) = ADP + phosphate + 5 H(+)(out). Its function is as follows. Produces ATP from ADP in the presence of a proton gradient across the membrane. The alpha chain is a regulatory subunit. In Methylorubrum populi (strain ATCC BAA-705 / NCIMB 13946 / BJ001) (Methylobacterium populi), this protein is ATP synthase subunit alpha.